Consider the following 362-residue polypeptide: Oxysterol-binding protein 5 (362 aa).

This sequence belongs to the OSBP family.

The sequence is that of Oxysterol-binding protein 5 (osbE) from Dictyostelium discoideum (Social amoeba).